Reading from the N-terminus, the 55-residue chain is Large ribosomal subunit protein bL33 (55 aa).

This sequence belongs to the bacterial ribosomal protein bL33 family.

This is Large ribosomal subunit protein bL33 from Campylobacter fetus subsp. fetus (strain 82-40).